Here is a 165-residue protein sequence, read N- to C-terminus: Fatty acid-binding protein homolog 3 (165 aa).

Residues 1–19 (MNLYLTLFSFCFLAIMAEA) form the signal peptide.

This sequence belongs to the calycin superfamily. Fatty-acid binding protein (FABP) family. Expressed in presumptive hypodermal cells by the comma stage and in posterior body wall muscle cells by the two-fold stage. From L1 to adult stages, expression continues in body wall muscle cells adjacent to the pseudocoelom, while hypodermal expression is extinguished.

It is found in the secreted. In terms of biological role, may play a role in sequestering potentially toxic fatty acids and their peroxidation products, or it may be involved in the maintenance of the impermeable lipid layer of the eggshell. The polypeptide is Fatty acid-binding protein homolog 3 (lbp-3) (Caenorhabditis elegans).